A 435-amino-acid chain; its full sequence is Exodeoxyribonuclease 7 large subunit (435 aa).

Polar residues predominate over residues 1–10 (MRGTRVTETA). Disordered regions lie at residues 1-21 (MRGTRVTETASAPRMAPGPPT) and 413-435 (AGKALPSPAQGATNGSLAAPRGK).

Belongs to the XseA family. In terms of assembly, heterooligomer composed of large and small subunits.

The protein resides in the cytoplasm. It catalyses the reaction Exonucleolytic cleavage in either 5'- to 3'- or 3'- to 5'-direction to yield nucleoside 5'-phosphates.. Its function is as follows. Bidirectionally degrades single-stranded DNA into large acid-insoluble oligonucleotides, which are then degraded further into small acid-soluble oligonucleotides. This chain is Exodeoxyribonuclease 7 large subunit, found in Leifsonia xyli subsp. xyli (strain CTCB07).